The chain runs to 340 residues: Solute-binding protein Dde_0634 (340 aa).

The N-terminal stretch at 1–29 (MKSTFAALLIMVGCLVSGALLTGSEAAAA) is a signal peptide. Residues Y99, R172, 210-213 (TSLD), and Y235 contribute to the (indol-3-yl)acetate site.

This sequence belongs to the bacterial solute-binding protein 7 family. As to quaternary structure, the complex is comprised of an extracytoplasmic solute-binding protein and a heteromeric permease formed by two transmembrane proteins.

Its subcellular location is the periplasm. In terms of biological role, solute-binding protein that binds indole-3-pyruvate and indole-3-acetate (in vitro). Can also bind D-tryptophan (in vitro), but that is probably not a physiological ligand. Probably part of a tripartite ATP-independent periplasmic (TRAP) transport system that mediates solute transport into the cytoplasm. The polypeptide is Solute-binding protein Dde_0634 (Oleidesulfovibrio alaskensis (strain ATCC BAA-1058 / DSM 17464 / G20) (Desulfovibrio alaskensis)).